The primary structure comprises 72 residues: Translation initiation factor IF-1 (72 aa).

The S1-like domain maps to 1–72 (MAKDDVIEID…DKGRITFRYK (72 aa)).

This sequence belongs to the IF-1 family. As to quaternary structure, component of the 30S ribosomal translation pre-initiation complex which assembles on the 30S ribosome in the order IF-2 and IF-3, IF-1 and N-formylmethionyl-tRNA(fMet); mRNA recruitment can occur at any time during PIC assembly.

It localises to the cytoplasm. Its function is as follows. One of the essential components for the initiation of protein synthesis. Stabilizes the binding of IF-2 and IF-3 on the 30S subunit to which N-formylmethionyl-tRNA(fMet) subsequently binds. Helps modulate mRNA selection, yielding the 30S pre-initiation complex (PIC). Upon addition of the 50S ribosomal subunit IF-1, IF-2 and IF-3 are released leaving the mature 70S translation initiation complex. This is Translation initiation factor IF-1 from Sulfurovum sp. (strain NBC37-1).